We begin with the raw amino-acid sequence, 141 residues long: Hemoglobin subunit alpha-A (141 aa).

The region spanning 1-141 is the Globin domain; it reads VLSANDKTNV…VGNVLSAKYR (141 aa). His58 is a binding site for O2. Residue His87 participates in heme b binding.

Belongs to the globin family. Heterotetramer of two alpha chains and two beta chains. In terms of tissue distribution, red blood cells.

Functionally, involved in oxygen transport from the lung to the various peripheral tissues. This chain is Hemoglobin subunit alpha-A (HBAA), found in Trigonoceps occipitalis (White-headed vulture).